A 347-amino-acid polypeptide reads, in one-letter code: Spermidine/putrescine import ATP-binding protein PotA (347 aa).

In terms of domain architecture, ABC transporter spans 6 to 236; that stretch reads IELRDISKHY…PKNSFVAKFI (231 aa). 38–45 is a binding site for ATP; that stretch reads GPSGCGKT.

Belongs to the ABC transporter superfamily. Spermidine/putrescine importer (TC 3.A.1.11.1) family. The complex is composed of two ATP-binding proteins (PotA), two transmembrane proteins (PotB and PotC) and a solute-binding protein (PotD).

The protein localises to the cell membrane. The enzyme catalyses ATP + H2O + polyamine-[polyamine-binding protein]Side 1 = ADP + phosphate + polyamineSide 2 + [polyamine-binding protein]Side 1.. Functionally, part of the ABC transporter complex PotABCD involved in spermidine/putrescine import. Responsible for energy coupling to the transport system. The chain is Spermidine/putrescine import ATP-binding protein PotA from Clostridioides difficile (strain 630) (Peptoclostridium difficile).